We begin with the raw amino-acid sequence, 147 residues long: Hemoglobin subunit beta (147 aa).

A Globin domain is found at 3–147 (HWTAEEKQII…VAHALARKYH (145 aa)). Positions 64 and 93 each coordinate heme b.

As to quaternary structure, heterotetramer of two alpha (or alpha-D) and two beta chains. As to expression, red blood cells.

Involved in oxygen transport from the lung to the various peripheral tissues. The beta chain is a component of adult hemoglobin A and D. This chain is Hemoglobin subunit beta, found in Aythya fuligula (Tufted duck).